The chain runs to 406 residues: Acetylornithine aminotransferase (406 aa).

Pyridoxal 5'-phosphate is bound by residues 113 to 114 (GT) and Phe-145. Residue Arg-148 participates in N(2)-acetyl-L-ornithine binding. Residue 233-236 (DEIQ) participates in pyridoxal 5'-phosphate binding. Lys-262 carries the post-translational modification N6-(pyridoxal phosphate)lysine. Ser-290 contributes to the N(2)-acetyl-L-ornithine binding site. Thr-291 contacts pyridoxal 5'-phosphate.

Belongs to the class-III pyridoxal-phosphate-dependent aminotransferase family. ArgD subfamily. As to quaternary structure, homodimer. The cofactor is pyridoxal 5'-phosphate.

It localises to the cytoplasm. The catalysed reaction is N(2)-acetyl-L-ornithine + 2-oxoglutarate = N-acetyl-L-glutamate 5-semialdehyde + L-glutamate. Its pathway is amino-acid biosynthesis; L-arginine biosynthesis; N(2)-acetyl-L-ornithine from L-glutamate: step 4/4. The protein is Acetylornithine aminotransferase of Leptospira interrogans serogroup Icterohaemorrhagiae serovar Lai (strain 56601).